A 346-amino-acid chain; its full sequence is Haptoglobin (346 aa).

The N-terminal stretch at 1–18 is a signal peptide; that stretch reads MRALGAVVTLLLWGQLFA. A Sushi domain is found at 31 to 87; the sequence is DSCPKPPEIENGYVEHLVRYRCQHYRLRTEGDGVYTLNSEKQWVNTAAGERLPECEA. Intrachain disulfides connect Cys-52–Cys-85, Cys-89–Cys-206, Cys-249–Cys-280, and Cys-291–Cys-321. The 243-residue stretch at 102–344 folds into the Peptidase S1 domain; sequence IIGGSLDAKG…FLDWIQETMA (243 aa). N-linked (GlcNAc...) asparagine glycans are attached at residues Asn-147 and Asn-181. Residues 258–263 form an interaction with CD163 region; that stretch reads VPEKEG.

Belongs to the peptidase S1 family. Tetramer of two alpha and two beta chains; disulfide-linked. The hemoglobin/haptoglobin complex is composed of a haptoglobin dimer bound to two hemoglobin alpha-beta dimers. Interacts with CD163. Interacts with ERGIC3. Expressed by the liver and secreted in plasma.

It is found in the secreted. Its function is as follows. As a result of hemolysis, hemoglobin is found to accumulate in the kidney and is secreted in the urine. Haptoglobin captures, and combines with free plasma hemoglobin to allow hepatic recycling of heme iron and to prevent kidney damage. Haptoglobin also acts as an antioxidant, has antibacterial activity and plays a role in modulating many aspects of the acute phase response. Hemoglobin/haptoglobin complexes are rapidly cleared by the macrophage CD163 scavenger receptor expressed on the surface of liver Kupfer cells through an endocytic lysosomal degradation pathway. In Mesocricetus auratus (Golden hamster), this protein is Haptoglobin (HP).